Here is a 763-residue protein sequence, read N- to C-terminus: MRQTPLLQLALLLSLPRSLGGKGCPSPPCECHQEDDFRVTCKDIHRIPSLPPSTQTLKFIETHLKTIPSRAFSNLPNISRIYLSIDATLQRLESHSFYNLSKMTHIEIRNTRSLTYIDPGALKELPLLKFLGIFNTGLGVFPDLTKVYSTDVFFILEITDNPYMTSIPANAFQGLCNETLTLKLYNNGFTSIQGHAFNGTKLDAVYLNKNKYLTAIDQDAFGGVYSGPTLLDVSYTSVTALPSKGLEHLKELIARNTWTLKKLPLTLSFLHLTRADLSYPSHCCAFKNQKKIRGILESFMCNDSSIRSLRQRKSVNALNGPFDQEYEEYLGDSHAGYKDNSKFQDTRSNSHYYVFFEEQDEILGFGQELKNPQEETLQAFDSHYDYTVCGGNEDMVCTPKSDEFNPCEDIMGYKFLRIVVWFVSLLALLGNVFVLIILLTSHYKLTVPRFLMCNLAFADFCMGMYLLLIASVDLYTHSEYYNHAIDWQTGPGCNAAGFFTVFASELSVYTLTVITLERWYAITFAMRLDRKMRLRHAYAIMVGGWVCCFLLALLPLVGISSYAKVSICLPMDTETPLALAYIILVLLLNIVAFIIVCSCYVKIYITVRNPQYNTGDKDTKIAKRMAVLIFTDFMCMAPISFYALSALMNKPLITVTNSKILLVLFYPLNSCANPFLYAIFTKTFQRDVFILLSKFGICKRQAQAYRGQRVSPKNSTGIQVQKVTRNMRQSLPNMQDDYELLENSHLTPNKQSHISKEYNQTVL.

Residues 1–21 (MRQTPLLQLALLLSLPRSLGG) form the signal peptide. The Extracellular portion of the chain corresponds to 22-412 (KGCPSPPCEC…EFNPCEDIMG (391 aa)). A disulfide bridge links cysteine 31 with cysteine 41. N-linked (GlcNAc...) asparagine glycosylation is found at asparagine 77 and asparagine 99. LRR repeat units lie at residues 100 to 124 (LSKMTHIEIRNTRSLTYIDPGALKE), 125 to 150 (LPLLKFLGIFNTGLGVFPDLTKVYST), 151 to 174 (DVFFILEITDNPYMTSIPANAFQG), 176 to 199 (CNETLTLKLYNNGFTSIQGHAFNG), 201 to 223 (KLDAVYLNKNKYLTAIDQDAFGG), 225 to 248 (YSGPTLLDVSYTSVTALPSKGLEH), and 264 to 288 (PLTLSFLHLTRADLSYPSHCCAFKN). N-linked (GlcNAc...) asparagine glycans are attached at residues asparagine 177 and asparagine 198. Asparagine 302 carries N-linked (GlcNAc...) asparagine glycosylation. Tyrosine 384 bears the Sulfotyrosine mark. The helical transmembrane segment at 413 to 440 (YKFLRIVVWFVSLLALLGNVFVLIILLT) threads the bilayer. Topologically, residues 441 to 449 (SHYKLTVPR) are cytoplasmic. The chain crosses the membrane as a helical span at residues 450–472 (FLMCNLAFADFCMGMYLLLIASV). Residues 473–493 (DLYTHSEYYNHAIDWQTGPGC) are Extracellular-facing. Cysteine 493 and cysteine 568 are disulfide-bonded. A helical transmembrane segment spans residues 494-516 (NAAGFFTVFASELSVYTLTVITL). Topologically, residues 517-536 (ERWYAITFAMRLDRKMRLRH) are cytoplasmic. A helical transmembrane segment spans residues 537 to 559 (AYAIMVGGWVCCFLLALLPLVGI). The Extracellular segment spans residues 560–579 (SSYAKVSICLPMDTETPLAL). A helical transmembrane segment spans residues 580–601 (AYIILVLLLNIVAFIIVCSCYV). Over 602–624 (KIYITVRNPQYNTGDKDTKIAKR) the chain is Cytoplasmic. A helical transmembrane segment spans residues 625-648 (MAVLIFTDFMCMAPISFYALSALM). Topologically, residues 649 to 659 (NKPLITVTNSK) are extracellular. The chain crosses the membrane as a helical span at residues 660 to 681 (ILLVLFYPLNSCANPFLYAIFT). The Cytoplasmic portion of the chain corresponds to 682–763 (KTFQRDVFIL…ISKEYNQTVL (82 aa)). Residues 761–763 (TVL) carry the PDZ-binding motif.

Belongs to the G-protein coupled receptor 1 family. FSH/LSH/TSH subfamily. As to quaternary structure, interacts with heterodimer GPHA2:GPHB5; this interaction stimulates cAMP production. Interacts (via the PDZ-binding motif) with SCRIB; regulates TSHR trafficking and function. Glycosylated. In terms of processing, sulfated. Sulfation on Tyr-384 plays a role in thyrotropin receptor binding and activation.

Its subcellular location is the cell membrane. It localises to the basolateral cell membrane. Receptor for the thyroid-stimulating hormone (TSH) or thyrotropin. Also acts as a receptor for the heterodimeric glycoprotein hormone (GPHA2:GPHB5) or thyrostimulin. The activity of this receptor is mediated by G proteins which activate adenylate cyclase. Plays a central role in controlling thyroid cell metabolism. This chain is Thyrotropin receptor (TSHR), found in Felis catus (Cat).